The sequence spans 832 residues: Conserved oligomeric Golgi complex subunit 6 (832 aa).

The protein belongs to the COG6 family.

Its subcellular location is the golgi apparatus membrane. Acts as a component of the peripheral membrane COG complex that is involved in intra-Golgi protein trafficking. COG is located at the cis-Golgi, and regulates tethering of retrograde intra-Golgi vesicles and possibly a number of other membrane trafficking events. The polypeptide is Conserved oligomeric Golgi complex subunit 6 (COG6) (Candida glabrata (strain ATCC 2001 / BCRC 20586 / JCM 3761 / NBRC 0622 / NRRL Y-65 / CBS 138) (Yeast)).